The chain runs to 284 residues: Tropomyosin (284 aa).

Positions 1–284 (MDAIKKKMQA…DQTFQELFGY (284 aa)) form a coiled coil. The segment covering 113-142 (LEKATHTADESDRVRKVMENRSFQDEERAN) has biased composition (basic and acidic residues). The segment at 113-143 (LEKATHTADESDRVRKVMENRSFQDEERANT) is disordered.

This sequence belongs to the tropomyosin family.

In terms of biological role, tropomyosin, in association with the troponin complex, plays a central role in the calcium dependent regulation of muscle contraction. This Acanthocheilonema viteae (Filarial nematode worm) protein is Tropomyosin.